The chain runs to 458 residues: tRNA modification GTPase MnmE (458 aa).

(6S)-5-formyl-5,6,7,8-tetrahydrofolate-binding residues include Arg22, Glu84, and Arg123. In terms of domain architecture, TrmE-type G spans 220-379; it reads GIATAIIGRP…LETAIADLFF (160 aa). A K(+)-binding site is contributed by Asn230. GTP is bound by residues 230 to 235, 249 to 255, and 274 to 277; these read NVGKSS, TDIAGTT, and DTAG. Ser234 is a Mg(2+) binding site. Thr249, Ile251, and Thr254 together coordinate K(+). Mg(2+) is bound at residue Thr255. Residue Lys458 coordinates (6S)-5-formyl-5,6,7,8-tetrahydrofolate.

The protein belongs to the TRAFAC class TrmE-Era-EngA-EngB-Septin-like GTPase superfamily. TrmE GTPase family. In terms of assembly, homodimer. Heterotetramer of two MnmE and two MnmG subunits. Requires K(+) as cofactor.

It localises to the cytoplasm. Exhibits a very high intrinsic GTPase hydrolysis rate. Involved in the addition of a carboxymethylaminomethyl (cmnm) group at the wobble position (U34) of certain tRNAs, forming tRNA-cmnm(5)s(2)U34. This is tRNA modification GTPase MnmE from Bacillus cereus (strain ATCC 10987 / NRS 248).